The primary structure comprises 248 residues: Myelin protein P0 (248 aa).

Residues 1–29 (MAPGAPSSSPSPILAALLFSSLVLSPAQA) form the signal peptide. The Ig-like V-type domain maps to 30 to 143 (IVVYTDKEVY…DIVGKTSQVT (114 aa)). Residues 30–153 (IVVYTDKEVY…LYVFEKVPTR (124 aa)) are Extracellular-facing. A disulfide bridge connects residues Cys50 and Cys127. Residue Asn122 is glycosylated (N-linked (GlcNAc...) (complex) asparagine). The helical transmembrane segment at 154–179 (YGVVLGAVIGGVLGVVLLVLLLFYVV) threads the bilayer. At 180-248 (RYCWLRRQAA…GLGESRKDKK (69 aa)) the chain is on the cytoplasmic side. Residue Ser210 is modified to Phosphoserine; by PKC. The disordered stretch occupies residues 222-248 (MLDHSRSTKAASEKKAKGLGESRKDKK). The segment covering 224 to 248 (DHSRSTKAASEKKAKGLGESRKDKK) has biased composition (basic and acidic residues). Ser226 and Ser228 each carry phosphoserine. Residues Ser233 and Ser243 each carry the phosphoserine; by PKC modification.

It belongs to the myelin P0 protein family. As to quaternary structure, homodimer and homotetramer. Post-translationally, N-glycosylated; contains sulfate-substituted glycan.

It localises to the cell membrane. Is an adhesion molecule necessary for normal myelination in the peripheral nervous system. It mediates adhesion between adjacent myelin wraps and ultimately drives myelin compaction. This Equus caballus (Horse) protein is Myelin protein P0 (MPZ).